Here is a 222-residue protein sequence, read N- to C-terminus: Octanoyltransferase (222 aa).

In terms of domain architecture, BPL/LPL catalytic spans 34 to 214; the sequence is GEKNSTVLIL…EFSKHDEALV (181 aa). Residues 72–79, 144–146, and 157–159 each bind substrate; these read RGGKLTWH, AIG, and GVA. Cys175 (acyl-thioester intermediate) is an active-site residue.

This sequence belongs to the LipB family.

It localises to the cytoplasm. It catalyses the reaction octanoyl-[ACP] + L-lysyl-[protein] = N(6)-octanoyl-L-lysyl-[protein] + holo-[ACP] + H(+). It functions in the pathway protein modification; protein lipoylation via endogenous pathway; protein N(6)-(lipoyl)lysine from octanoyl-[acyl-carrier-protein]: step 1/2. Functionally, catalyzes the transfer of endogenously produced octanoic acid from octanoyl-acyl-carrier-protein onto the lipoyl domains of lipoate-dependent enzymes. Lipoyl-ACP can also act as a substrate although octanoyl-ACP is likely to be the physiological substrate. The protein is Octanoyltransferase of Paenarthrobacter aurescens (strain TC1).